The sequence spans 100 residues: Large ribosomal subunit protein bL28 (100 aa).

The protein belongs to the bacterial ribosomal protein bL28 family.

The polypeptide is Large ribosomal subunit protein bL28 (Gluconacetobacter diazotrophicus (strain ATCC 49037 / DSM 5601 / CCUG 37298 / CIP 103539 / LMG 7603 / PAl5)).